The primary structure comprises 429 residues: MENEQPVIPVQARFNSIKAFFVLLVRQFNEDGCRQSAAALTYTTLFAIVPVMTVSFVVLSSVPALQGKSAQLQEWAFEYFVPSAGNMLLDHLQSFAKQATNLTVLGIVFLVVTSVLMLSTVEQTLNRIWKVQTPRKGLVSLLMYWALLSLGPICLGLGLAITSYLTSQAIFSDTVSYLGGVRLWLAVLPFLFTTAMLTLMYTVVPNTTVPFRQGVLGAAMAALLFELAKGAFTFFIKQAPSYQVVYGAFAAVPVFLLWIYISWTIVLGGAELVRALVVFQEHQRQVPRMHALVRLLNVFWQRQQSGKVLRSKEIRQVMQESGISQWDEFRNLLVNANLIRRTDEGGYILSRDLRNISLGQLVAMLPWPAHTQLRVRQQPESLPWEQALKSRMDEAREGMMAPLDISLDALFSAPSAEKERHPEQQGRND.

Helical transmembrane passes span 45 to 65 (LFAIVPVMTVSFVVLSSVPAL), 102 to 122 (LTVLGIVFLVVTSVLMLSTVE), 141 to 161 (LLMYWALLSLGPICLGLGLAI), 184 to 204 (WLAVLPFLFTTAMLTLMYTVV), 216 to 236 (LGAAMAALLFELAKGAFTFFI), and 256 to 278 (LLWIYISWTIVLGGAELVRALVV).

Belongs to the UPF0761 family.

The protein localises to the cell inner membrane. The sequence is that of UPF0761 membrane protein ABO_1543 from Alcanivorax borkumensis (strain ATCC 700651 / DSM 11573 / NCIMB 13689 / SK2).